Consider the following 216-residue polypeptide: MATGSQTSWLLTFTLLCLPWPQEAGAFPAMPLSNLFANAVLRAQHLHQLAADTYKEFERAYIPEGQRYSIQNAQAAFCFSETIPAPTGKEEAQQRSDMELLRFSLLLIQSWLGPVQFLSRVFTNSLVFGTSDRVFEKLKDLEEGIQALMRELEDGSLRAGQLLKQTYDKFDTNMRSDDALLKNYGLLSCFKKDLHKAETYLRVMKCRRFVESSCAF.

Positions methionine 1–alanine 26 are cleaved as a signal peptide. Histidine 45 serves as a coordination point for Zn(2+). The cysteines at positions 78 and 189 are disulfide-linked. Residue serine 131 is modified to Phosphoserine. A Zn(2+)-binding site is contributed by glutamate 198. Cysteine 206 and cysteine 214 are oxidised to a cystine.

This sequence belongs to the somatotropin/prolactin family.

The protein resides in the secreted. Functionally, plays an important role in growth control. Its major role in stimulating body growth is to stimulate the liver and other tissues to secrete IGF1. It stimulates both the differentiation and proliferation of myoblasts. It also stimulates amino acid uptake and protein synthesis in muscle and other tissues. The sequence is that of Somatotropin (GH1) from Spalax ehrenbergi (Middle East blind mole rat).